The primary structure comprises 73 residues: Pelophylaxin-1 (73 aa).

Positions M1–C22 are cleaved as a signal peptide. Positions E23–I41 are excised as a propeptide. C67 and C73 are oxidised to a cystine.

In terms of tissue distribution, expressed by the skin glands.

The protein localises to the secreted. Functionally, antimicrobial peptide. This chain is Pelophylaxin-1, found in Pelophylax fukienensis (Fukien gold-striped pond frog).